Here is a 333-residue protein sequence, read N- to C-terminus: Phenylalanine--tRNA ligase alpha subunit (333 aa).

Mg(2+) is bound at residue Glu-248.

The protein belongs to the class-II aminoacyl-tRNA synthetase family. Phe-tRNA synthetase alpha subunit type 1 subfamily. Tetramer of two alpha and two beta subunits. It depends on Mg(2+) as a cofactor.

The protein resides in the cytoplasm. The enzyme catalyses tRNA(Phe) + L-phenylalanine + ATP = L-phenylalanyl-tRNA(Phe) + AMP + diphosphate + H(+). This chain is Phenylalanine--tRNA ligase alpha subunit, found in Ureaplasma urealyticum serovar 10 (strain ATCC 33699 / Western).